Consider the following 84-residue polypeptide: Large ribosomal subunit protein bL27 (84 aa).

The tract at residues 1–20 is disordered; the sequence is MAHKKAGGSTRNGRDSHSKR.

Belongs to the bacterial ribosomal protein bL27 family.

This Blochmanniella pennsylvanica (strain BPEN) protein is Large ribosomal subunit protein bL27.